The chain runs to 864 residues: Ribosome biogenesis protein ERB1 (864 aa).

Positions 1 to 52 are enriched in basic and acidic residues; the sequence is MAVDKGRRPVPPERRAQGRKRAEPGDVTIRETRTRPVHTPEPEPELLAKDGI. Disordered regions lie at residues 1-153 and 191-231; these read MAVD…VKEG and ESRN…STED. Over residues 53-71 the composition is skewed to acidic residues; sequence LELEDDDDNDDDDDDDDDD. Basic and acidic residues predominate over residues 72 to 83; sequence KSNHHDGAPKNE. Over residues 100-135 the composition is skewed to acidic residues; sequence DDGDEDEEEDDEDEDEDASDDEAFDSDDLENWDEEA. 6 WD repeats span residues 509–549, 559–599, 694–732, 735–774, 778–817, and 833–864; these read AHAP…CVAT, ADRS…KTMY, NSAMAVQCVCFHPSRPWLFVATQRYVRVYDLVQQSLVKT, PGVRWISSLDVHPSGDHVIIGSYDRRVLWFDLDLSERPYK, YHSRAVRAVAYHPRFPLFASAADDGTVHVYHGTVYSDLLQ, and QDALGVLSIAWHPTLPWLVSAGADGDARLWTP.

The protein belongs to the WD repeat BOP1/ERB1 family. As to quaternary structure, component of the NOP7 complex, composed of ERB1, NOP7 and YTM1. The complex is held together by ERB1, which interacts with NOP7 via its N-terminal domain and with YTM1 via a high-affinity interaction between the seven-bladed beta-propeller domains of the 2 proteins. The NOP7 complex associates with the 66S pre-ribosome.

The protein resides in the nucleus. Its subcellular location is the nucleolus. The protein localises to the nucleoplasm. In terms of biological role, component of the NOP7 complex, which is required for maturation of the 25S and 5.8S ribosomal RNAs and formation of the 60S ribosome. The chain is Ribosome biogenesis protein ERB1 from Malassezia globosa (strain ATCC MYA-4612 / CBS 7966) (Dandruff-associated fungus).